We begin with the raw amino-acid sequence, 568 residues long: Protein yellow (568 aa).

Residues 1 to 28 form the signal peptide; that stretch reads MHAQDKGGILPALSLLLIAVAMVSPSQA. N-linked (GlcNAc...) asparagine glycosylation is found at Asn151 and Asn222.

This sequence belongs to the major royal jelly protein family.

Its subcellular location is the secreted. Controls the pigmentation pattern of the adult cuticle and larval mouth parts. The sequence is that of Protein yellow (y) from Drosophila subobscura (Fruit fly).